The primary structure comprises 574 residues: FAD-linked oxidoreductase sor8 (574 aa).

The signal sequence occupies residues 1–27; sequence MYAPPFVRAFGIAVLAVLPSFSSPATA. 7 N-linked (GlcNAc...) asparagine glycosylation sites follow: Asn58, Asn112, Asn136, Asn266, Asn312, Asn363, and Asn384. The 180-residue stretch at 126–305 folds into the FAD-binding PCMH-type domain; the sequence is VIGTYVQYAV…YSMTVKAHAN (180 aa).

The protein belongs to the oxygen-dependent FAD-linked oxidoreductase family. It depends on FAD as a cofactor.

The protein operates within secondary metabolite biosynthesis. In terms of biological role, FAD-linked oxidoreductase; part of the SOR gene cluster that mediates the biosynthesis of sorbicillinoids, a diverse group of yellow secondary metabolites that restrict growth of competing pathogenic fungi but not of bacteria. Sorbicillinoids biosynthesis requires the action of two PKSs. The SOR cluster is required for the production of trichodimerol and dihydrotrichotetronin, with sor2 being sufficient for production of trichodimerol, but not dihydrotrichotetronin in the light. Sor1 iteratively combines three acetyl units and the growing chain is modified by the ketoacyl reductase subunit, and optional by the enoyl reductase subunit in the second cycle. The polyketide is then handed over to the PKS sor2, which adds three more acetyl units, and two methyl groups. Sor2 releases an aldehyde, which undergoes spontaneous cyclization resulting in the formation of sorbicillin or 2',3'-dihydrosorbicillin. The monooxygenase sor5 oxidizes sorbicillin and 2',3'-dihydrosorbicillin to 2',3'-dihydrosorbicillinol and sorbicillinol, respectively. The oxidoreductase sor8 further converts sorbicillinol into oxosorbicillinol. Sorbicillinol is the building block for the other sorbicillinoids such as disorbicillinol, bisvertinolon, dihydrobisvertinolone, and dihydrotrichotetronine. The sequence is that of FAD-linked oxidoreductase sor8 from Hypocrea jecorina (strain QM6a) (Trichoderma reesei).